Reading from the N-terminus, the 325-residue chain is Probable cell division protein WhiA (325 aa).

Residues Ser273–Asn306 constitute a DNA-binding region (H-T-H motif).

Belongs to the WhiA family.

Involved in cell division and chromosome segregation. The sequence is that of Probable cell division protein WhiA from Frankia casuarinae (strain DSM 45818 / CECT 9043 / HFP020203 / CcI3).